A 272-amino-acid polypeptide reads, in one-letter code: METYAVFGNPIAHSKSPFIHQQFAQQLNIEHPYGRVLAPINDFINTLNAFFRAGGKGANVTVPFKEEAFARADELTERAALAGAVNTLKRLEDGRLLGDNTDGVGLLSDLERLSFIRPGLRILLIGAGGASRGVLLPLLSLDCAVTITNRTVSRAEELAKLFAHTGSIQALGMDELEGHEFDLIINATSSGISGDIPAIPSSLIHPGIYCYDMFYQKGKTPFLAWCEQRGSKRNADGLGMLVAQAAHAFLLWHGVLPDVEPVIKLLQQELSA.

Shikimate contacts are provided by residues 14–16 and Thr61; that span reads SKS. Lys65 serves as the catalytic Proton acceptor. NADP(+) is bound at residue Glu77. Shikimate contacts are provided by Asn86 and Asp102. Residues 126–130, 149–154, and Met213 contribute to the NADP(+) site; these read GAGGA and NRTVSR. Tyr215 is a binding site for shikimate. Residue Gly237 coordinates NADP(+).

This sequence belongs to the shikimate dehydrogenase family. In terms of assembly, homodimer.

It catalyses the reaction shikimate + NADP(+) = 3-dehydroshikimate + NADPH + H(+). The protein operates within metabolic intermediate biosynthesis; chorismate biosynthesis; chorismate from D-erythrose 4-phosphate and phosphoenolpyruvate: step 4/7. Functionally, involved in the biosynthesis of the chorismate, which leads to the biosynthesis of aromatic amino acids. Catalyzes the reversible NADPH linked reduction of 3-dehydroshikimate (DHSA) to yield shikimate (SA). In Shigella sonnei (strain Ss046), this protein is Shikimate dehydrogenase (NADP(+)).